The following is a 298-amino-acid chain: Dihydrodipicolinate reductase-like protein CRR1, chloroplastic (298 aa).

The transit peptide at 1 to 25 (MAAVNCHFFQLSRHLKPSRPSFSCS) directs the protein to the chloroplast. 160-163 (APTL) contributes to the NAD(+) binding site.

Belongs to the DapB family. In terms of tissue distribution, expressed specifically in leaves.

Its subcellular location is the plastid. It localises to the chloroplast stroma. Dihydrodipicolinate reductase (DHPR)-like protein that may not function as DHPR in lysine biosynthesis. Required for both formation and activity of the chloroplast NAD(P)H dehydrogenase (NDH) complex of the photosynthetic electron transport chain. May function in assembly or stabilization of the NDH complex. The polypeptide is Dihydrodipicolinate reductase-like protein CRR1, chloroplastic (Arabidopsis thaliana (Mouse-ear cress)).